The chain runs to 922 residues: Isoleucine--tRNA ligase (922 aa).

Residues 57-67 carry the 'HIGH' region motif; it reads PYANGDIHLGH. Glutamate 553 lines the L-isoleucyl-5'-AMP pocket. A 'KMSKS' region motif is present at residues 594–598; the sequence is KMSKS. Lysine 597 serves as a coordination point for ATP. Zn(2+) contacts are provided by cysteine 892, cysteine 895, cysteine 912, and cysteine 915.

The protein belongs to the class-I aminoacyl-tRNA synthetase family. IleS type 1 subfamily. As to quaternary structure, monomer. Requires Zn(2+) as cofactor.

Its subcellular location is the cytoplasm. The catalysed reaction is tRNA(Ile) + L-isoleucine + ATP = L-isoleucyl-tRNA(Ile) + AMP + diphosphate. Catalyzes the attachment of isoleucine to tRNA(Ile). As IleRS can inadvertently accommodate and process structurally similar amino acids such as valine, to avoid such errors it has two additional distinct tRNA(Ile)-dependent editing activities. One activity is designated as 'pretransfer' editing and involves the hydrolysis of activated Val-AMP. The other activity is designated 'posttransfer' editing and involves deacylation of mischarged Val-tRNA(Ile). The polypeptide is Isoleucine--tRNA ligase (Desulfitobacterium hafniense (strain Y51)).